Reading from the N-terminus, the 202-residue chain is Endothelin-1 (202 aa).

Positions 1–23 are cleaved as a signal peptide; sequence MDYFSMMVSLLLVAFHGAPETAA. The segment at 24–49 is disordered; it reads SGTELSTGAENPGEKPPASAPWRPRR. Positions 24 to 50 are excised as a propeptide; that stretch reads SGTELSTGAENPGEKPPASAPWRPRRS. 2 disulfides stabilise this stretch: C53-C67 and C55-C63. A propeptide spanning residues 74–202 is cleaved from the precursor; sequence VNTPGHIVPY…EQKVTHNRTH (129 aa). The segment at 110–124 is endothelin-like; it reads CQCTSPHDKKCWNFC.

It belongs to the endothelin/sarafotoxin family.

Its subcellular location is the secreted. In terms of biological role, endothelins are endothelium-derived vasoconstrictor peptides. Probable ligand for G-protein coupled receptors EDNRA and EDNRB which activates PTK2B, BCAR1, BCAR3 and, GTPases RAP1 and RHOA cascade in glomerular mesangial cells. Also binds the DEAR/FBXW7-AS1 receptor. Promotes mesenteric arterial wall remodeling via activation of ROCK signaling and subsequent colocalization of NFATC3 with F-actin filaments. NFATC3 then translocates to the nucleus where it subsequently promotes the transcription of the smooth muscle hypertrophy and differentiation marker ACTA2. This is Endothelin-1 (EDN1) from Oryctolagus cuniculus (Rabbit).